Consider the following 357-residue polypeptide: DNA primase small subunit PriS (357 aa).

Catalysis depends on residues Asp105, Asp107, and Asp259.

It belongs to the eukaryotic-type primase small subunit family. In terms of assembly, heterodimer of a small subunit (PriS) and a large subunit (PriL). It depends on Mg(2+) as a cofactor. Mn(2+) serves as cofactor.

In terms of biological role, catalytic subunit of DNA primase, an RNA polymerase that catalyzes the synthesis of short RNA molecules used as primers for DNA polymerase during DNA replication. The small subunit contains the primase catalytic core and has DNA synthesis activity on its own. Binding to the large subunit stabilizes and modulates the activity, increasing the rate of DNA synthesis while decreasing the length of the DNA fragments, and conferring RNA synthesis capability. The DNA polymerase activity may enable DNA primase to also catalyze primer extension after primer synthesis. May also play a role in DNA repair. This Methanococcus maripaludis (strain C5 / ATCC BAA-1333) protein is DNA primase small subunit PriS.